We begin with the raw amino-acid sequence, 102 residues long: Acid shock protein (102 aa).

Residues 1-21 (MKKVLALVVAAAMGLSSAAFA) form the signal peptide. The segment covering 22–41 (AETATTPAPTATTTKAAPAK) has biased composition (low complexity). Positions 22–58 (AETATTPAPTATTTKAAPAKTTHHKKQHKAAPAQKAQ) are excised as a propeptide. The disordered stretch occupies residues 22 to 102 (AETATTPAPT…PAKPAAQPAA (81 aa)). Over residues 80 to 90 (AAKKHAGKHGH) the composition is skewed to basic residues. Over residues 91–102 (QQPAKPAAQPAA) the composition is skewed to low complexity.

This sequence belongs to the Asr family. Proteolytic processing gives rise to the active protein.

The protein resides in the periplasm. Its function is as follows. Required for growth and/or survival at acidic conditions. The protein is Acid shock protein of Shigella flexneri.